Reading from the N-terminus, the 97-residue chain is U6-theraphotoxin-Hhn1a 1 (97 aa).

The first 33 residues, 1 to 33, serve as a signal peptide directing secretion; the sequence is MLIKQFSRRSKNMKVQILLAFAALFVLAVGSYA. A propeptide spanning residues 34–61 is cleaved from the precursor; it reads SESKKLDLRDALFSAMFSADYQLNPQER. 3 disulfides stabilise this stretch: Cys-63–Cys-77, Cys-70–Cys-82, and Cys-76–Cys-89.

The protein belongs to the neurotoxin 10 (Hwtx-1) family. 12 (Hntx-12) subfamily. As to expression, expressed by the venom gland.

The protein localises to the secreted. Ion channel inhibitor. The chain is U6-theraphotoxin-Hhn1a 1 from Cyriopagopus hainanus (Chinese bird spider).